A 695-amino-acid polypeptide reads, in one-letter code: Elongation factor G 1 (695 aa).

The 277-residue stretch at 6 to 282 (STFRNIGISA…AITYYLPDPT (277 aa)) folds into the tr-type G domain. GTP is bound by residues 15-22 (AHIDSGKT), 82-86 (DTPGH), and 136-139 (NKCD).

Belongs to the TRAFAC class translation factor GTPase superfamily. Classic translation factor GTPase family. EF-G/EF-2 subfamily.

Its subcellular location is the cytoplasm. Its function is as follows. Catalyzes the GTP-dependent ribosomal translocation step during translation elongation. During this step, the ribosome changes from the pre-translocational (PRE) to the post-translocational (POST) state as the newly formed A-site-bound peptidyl-tRNA and P-site-bound deacylated tRNA move to the P and E sites, respectively. Catalyzes the coordinated movement of the two tRNA molecules, the mRNA and conformational changes in the ribosome. This chain is Elongation factor G 1 (fusA), found in Treponema pallidum (strain Nichols).